The sequence spans 287 residues: UTP--glucose-1-phosphate uridylyltransferase 1 (287 aa).

Belongs to the UDPGP type 2 family.

It catalyses the reaction alpha-D-glucose 1-phosphate + UTP + H(+) = UDP-alpha-D-glucose + diphosphate. The protein operates within glycolipid metabolism; diglucosyl-diacylglycerol biosynthesis. Catalyzes the formation of UDP-glucose from glucose-1-phosphate and UTP. This is an intermediate step in the biosynthesis of diglucosyl-diacylglycerol (Glc2-DAG), i.e. a glycolipid found in the membrane, which is also used as a membrane anchor for lipoteichoic acid (LTA). This is UTP--glucose-1-phosphate uridylyltransferase 1 (gtaB1) from Staphylococcus saprophyticus subsp. saprophyticus (strain ATCC 15305 / DSM 20229 / NCIMB 8711 / NCTC 7292 / S-41).